The chain runs to 402 residues: Putative F-box protein At3g23960 (402 aa).

Positions 1–23 are disordered; the sequence is MRSRQLHNVSEDRETLSRRNKRS. Residues 26–73 form the F-box domain; that stretch reads SLNGHIPIDLLIEIFLKLPVKSIATCRSVSKFWTYVLGRQDFTELFLT.

This chain is Putative F-box protein At3g23960, found in Arabidopsis thaliana (Mouse-ear cress).